The following is an 86-amino-acid chain: Small ribosomal subunit protein bS20 (86 aa).

Positions 1–21 (MANTKSAIKAARKSLRLHDRN) are disordered.

This sequence belongs to the bacterial ribosomal protein bS20 family.

Its function is as follows. Binds directly to 16S ribosomal RNA. In Opitutus terrae (strain DSM 11246 / JCM 15787 / PB90-1), this protein is Small ribosomal subunit protein bS20.